Here is a 121-residue protein sequence, read N- to C-terminus: Small ribosomal subunit protein uS13 (121 aa).

The interval 97–121 (VRGQRTRTNARTRRGARKTVAGKKK) is disordered. Basic residues predominate over residues 100–121 (QRTRTNARTRRGARKTVAGKKK).

It belongs to the universal ribosomal protein uS13 family. In terms of assembly, part of the 30S ribosomal subunit. Forms a loose heterodimer with protein S19. Forms two bridges to the 50S subunit in the 70S ribosome.

Located at the top of the head of the 30S subunit, it contacts several helices of the 16S rRNA. In the 70S ribosome it contacts the 23S rRNA (bridge B1a) and protein L5 of the 50S subunit (bridge B1b), connecting the 2 subunits; these bridges are implicated in subunit movement. Contacts the tRNAs in the A and P-sites. The polypeptide is Small ribosomal subunit protein uS13 (Prochlorococcus marinus (strain MIT 9313)).